A 744-amino-acid polypeptide reads, in one-letter code: Prestin (744 aa).

At 1–75 (MDHAEENEIL…PITKWLPAYK (75 aa)) the chain is on the cytoplasmic side. Residues 76-105 (FKEYVLGDLVSGISTGVLQLPQGLAFAMLA) form a helical membrane-spanning segment. Topologically, residues 106–108 (AVP) are extracellular. Residues 109 to 126 (PIFGLYSSFYPVIMYCFL) traverse the membrane as a helical segment. Topologically, residues 127 to 137 (GTSRHISIGPF) are cytoplasmic. Residues 138–151 (AVISLMIGGVAVRL) traverse the membrane as a helical segment. Residues 152–168 (VPDDIVIPGGVNATNGT) lie on the Extracellular side of the membrane. An Involved in motor function motif is present at residues 158–168 (IPGGVNATNGT). 2 N-linked (GlcNAc...) asparagine glycosylation sites follow: Asn163 and Asn166. The helical transmembrane segment at 169 to 196 (EARDALRVKVAMSVTLLSGIIQFCLGVC) threads the bilayer. Topologically, residues 197–206 (RFGFVAIYLT) are cytoplasmic. The helical transmembrane segment at 207 to 230 (EPLVRGFTTAAAVHVFTSMLKYLF) threads the bilayer. Topologically, residues 231–241 (GVKTKRYSGIF) are extracellular. An intramembrane region (helical) is located at residues 242 to 253 (SVVYSTVAVLQN). Topologically, residues 254 to 258 (VKNLN) are extracellular. The helical transmembrane segment at 259–282 (VCSLGVGLMVFGLLLGGKEFNERF) threads the bilayer. Topologically, residues 283 to 291 (KEKLPAPIP) are cytoplasmic. The helical transmembrane segment at 292 to 307 (LEFFAVVMGTGISAGF) threads the bilayer. Over 308-332 (NLKESYNVDVVGTLPLGLLPPANPD) the chain is Extracellular. The chain crosses the membrane as a helical span at residues 333–367 (TSLFHLVYVDAIAIAIVGFSVTISMAKTLANKHGY). The Cytoplasmic portion of the chain corresponds to 368–370 (QVD). A helical membrane pass occupies residues 371–388 (GNQELIALGLCNSIGSLF). Residues 389–396 (QTFSISCS) lie on the Extracellular side of the membrane. A helical transmembrane segment spans residues 397-406 (LSRSLVQEGT). Ser398 serves as a coordination point for salicylate. Over 407–410 (GGKT) the chain is Cytoplasmic. Residues 411 to 432 (QLAGCLASLMILLVILATGFLF) form a helical membrane-spanning segment. At 433-436 (ESLP) the chain is on the extracellular side. A helical membrane pass occupies residues 437 to 464 (QAVLSAIVIVNLKGMFMQFSDLPFFWRT). Residue Ser465 is a topological domain, cytoplasmic. The helical transmembrane segment at 466-481 (KIELTIWLTTFVSSLF) threads the bilayer. Topologically, residues 482–483 (LG) are extracellular. The helical transmembrane segment at 484 to 504 (LDYGLITAVIIALLTVIYRTQ) threads the bilayer. Residues 505 to 718 (SPSYKVLGKL…AVLGSQLREA (214 aa)) form an extended region for STAS domain region. Topologically, residues 505–744 (SPSYKVLGKL…PNATPATPEA (240 aa)) are cytoplasmic. Residues 525 to 713 (AYEEVKEIPG…HSIHDAVLGS (189 aa)) form the STAS domain. The disordered stretch occupies residues 718–744 (ALAEQEASAPPSQEDLEPNATPATPEA).

It belongs to the SLC26A/SulP transporter (TC 2.A.53) family. Homodimer. Interacts (via STAS domain) with CALM; this interaction is calcium-dependent and the STAS domain interacts with only one lobe of CALM which is an elongated conformation. Interacts with MYH1.

Its subcellular location is the lateral cell membrane. The catalysed reaction is 2 hydrogencarbonate(in) + chloride(out) = 2 hydrogencarbonate(out) + chloride(in). Functionally, voltage-sensitive motor protein that drives outer hair cell (OHC) electromotility (eM) and participates in sound amplification in the hearing organ. Converts changes in the transmembrane electric potential into mechanical displacements resulting in the coupling of its expansion to movement of a charged voltage sensor across the lipid membrane. The nature of the voltage sensor is not completely clear, and two models compete. In the first model, acts as an incomplete transporter where intracellular chloride anion acts as extrinsic voltage sensor that drives conformational change in the protein which is sufficient to produce a length change in the plane of the membrane and hence in the length of the OHC. The second model in which multiple charged amino acid residues are distributed at the intracellular and extracellular membrane interfaces that form an intrinsic voltage sensor, whose movement produces the non-linear capacitance (NLC). However, the effective voltage sensor may be the result of a hybrid voltage sensor, assembled from intrinsic charge (charged residues) and extrinsic charge (bound anion). Notably, binding of anions to the anion-binding pocket partially neutralizes the intrinsic positive charge rather than to form an electrically negative sensor, therefore remaining charge may serve as voltage sensor that, after depolarization, moves from down (expanded state) to up (contracted) conformation, which is accompanied by an eccentric contraction of the intermembrane cross-sectional area of the protein as well as a major increase in the hydrophobic thickness of the protein having as consequences the plasma membrane thickening and the cell contraction after membrane depolarization. The anion-binding pocket transits from the inward-open (Down) state, where it is exposed toward the intracellular solvent in the absence of anion, to the occluded (Up) state upon anion binding. Salicylate competes for the anion-binding site and inhibits the voltage-sensor movement, and therefore inhibits the charge transfer and electromotility by displacing Cl(-) from the anion-binding site and by preventing the structural transitions to the contracted state. In addition, can act as a weak Cl(-)/HCO3(-) antiporter across the cell membrane and so regulate the intracellular pH of the outer hair cells (OHCs), while firstly found as being unable to mediate electrogenic anion transport. Moreover, supports a role in cardiac mechanical amplification serving as an elastic element to enhance the actomyosin- based sarcomere contraction system. The polypeptide is Prestin (Homo sapiens (Human)).